A 78-amino-acid chain; its full sequence is DNA gyrase inhibitor YacG (78 aa).

Zn(2+) is bound by residues Cys7, Cys10, Cys26, and Cys30.

This sequence belongs to the DNA gyrase inhibitor YacG family. As to quaternary structure, interacts with GyrB. The cofactor is Zn(2+).

Functionally, inhibits all the catalytic activities of DNA gyrase by preventing its interaction with DNA. Acts by binding directly to the C-terminal domain of GyrB, which probably disrupts DNA binding by the gyrase. In Shewanella piezotolerans (strain WP3 / JCM 13877), this protein is DNA gyrase inhibitor YacG.